Consider the following 301-residue polypeptide: uncharacterized protein (301 aa).

The 59-residue stretch at 27–85 folds into the FHA domain; sequence YKIGRHTNKSTSPSPSNLFFNSKVLSRQHAELWLDKDTLSVYIRDVKSSNGTFVNETRL. The segment at 187-236 is disordered; it reads TGKTRDNRNNHHYSRKSSPHISSLAVPSTKHLDGERDRNLKRSTSPLSSS. Residue Ser204 is modified to Phosphoserine. Residues 216 to 226 are compositionally biased toward basic and acidic residues; the sequence is KHLDGERDRNL. The residue at position 231 (Ser231) is a Phosphoserine.

Interacts with sad1.

It is found in the nucleus. This is an uncharacterized protein from Schizosaccharomyces pombe (strain 972 / ATCC 24843) (Fission yeast).